The chain runs to 483 residues: 6-phosphogluconate dehydrogenase, decarboxylating (483 aa).

NADP(+) contacts are provided by residues 10–15 and 33–35; these read GLAVMG and NRT. Lys-38 is subject to N6-acetyllysine. At Ser-57 the chain carries Phosphoserine. N6-acetyllysine is present on Lys-59. NADP(+) contacts are provided by residues 75–77 and Asn-103; that span reads VKA. Substrate contacts are provided by residues Asn-103 and 129–131; that span reads SGG. Phosphoserine is present on Ser-129. Lys-184 serves as the catalytic Proton acceptor. 187-188 is a binding site for substrate; sequence HN. The active-site Proton donor is the Glu-191. Substrate contacts are provided by Tyr-192, Lys-261, Arg-288, Arg-447, and His-453. 478-481 is a binding site for NADP(+); it reads SSSY.

The protein belongs to the 6-phosphogluconate dehydrogenase family. Homodimer.

Its subcellular location is the cytoplasm. The enzyme catalyses 6-phospho-D-gluconate + NADP(+) = D-ribulose 5-phosphate + CO2 + NADPH. It functions in the pathway carbohydrate degradation; pentose phosphate pathway; D-ribulose 5-phosphate from D-glucose 6-phosphate (oxidative stage): step 3/3. In terms of biological role, catalyzes the oxidative decarboxylation of 6-phosphogluconate to ribulose 5-phosphate and CO(2), with concomitant reduction of NADP to NADPH. This chain is 6-phosphogluconate dehydrogenase, decarboxylating (Pgd), found in Mus musculus (Mouse).